Consider the following 195-residue polypeptide: Putative L(+)-tartrate dehydratase subunit beta (195 aa).

H36 is a catalytic residue. K104 serves as a coordination point for substrate.

This sequence belongs to the class-I fumarase family. In terms of assembly, heterotetramer of two alpha and two beta subunits.

The enzyme catalyses (2R,3R)-tartrate = oxaloacetate + H2O. This chain is Putative L(+)-tartrate dehydratase subunit beta, found in Methanocaldococcus jannaschii (strain ATCC 43067 / DSM 2661 / JAL-1 / JCM 10045 / NBRC 100440) (Methanococcus jannaschii).